We begin with the raw amino-acid sequence, 615 residues long: TANK-binding kinase 1-binding protein 1 (615 aa).

The interval Met1–Arg279 is homodimerization. A coiled-coil region spans residues Tyr48 to Ile162. Ser184 is modified (phosphoserine). Residues Val221–Gln276 adopt a coiled-coil conformation. Residues Asp280–Ser329 are interaction with TBK1 and IKBKE. The segment at Gln326 to Gly458 is disordered. Over residues Pro345 to Ser365 the composition is skewed to pro residues. Ser365, Ser372, Ser379, Ser385, Ser400, and Ser415 each carry phosphoserine. A compositionally biased stretch (pro residues) spans Pro389–Cys406. The segment covering Pro416–Gly435 has biased composition (pro residues). Ser504 and Ser534 each carry phosphoserine. Residues Ile583 to His609 form a UBZ1-type zinc finger. Zn(2+)-binding residues include Cys586, Cys589, His605, and His609.

In terms of assembly, homodimer. May form a heterodimer with NAP1. Interacts with TKB1 and IKBKE. Weakly interacts with DDX3X. As to quaternary structure, (Microbial infection) Interacts with vaccinia virus protein C6. As to expression, detected in leukocytes, lung, placenta, small intestine, liver, kidney, spleen, muscle, heart, brain and at low levels in thymus.

In terms of biological role, adapter protein which constitutively binds TBK1 and IKBKE playing a role in antiviral innate immunity. The chain is TANK-binding kinase 1-binding protein 1 from Homo sapiens (Human).